The primary structure comprises 549 residues: Glucose-6-phosphate isomerase (549 aa).

3 positions are modified to N6-acetyllysine: lysine 80, lysine 228, and lysine 234. The active-site Proton donor is the glutamate 355. Catalysis depends on residues histidine 386 and lysine 514.

This sequence belongs to the GPI family.

Its subcellular location is the cytoplasm. The catalysed reaction is alpha-D-glucose 6-phosphate = beta-D-fructose 6-phosphate. Its pathway is carbohydrate biosynthesis; gluconeogenesis. The protein operates within carbohydrate degradation; glycolysis; D-glyceraldehyde 3-phosphate and glycerone phosphate from D-glucose: step 2/4. Its function is as follows. Catalyzes the reversible isomerization of glucose-6-phosphate to fructose-6-phosphate. The protein is Glucose-6-phosphate isomerase of Escherichia coli O139:H28 (strain E24377A / ETEC).